Reading from the N-terminus, the 251-residue chain is Putative (5-formylfuran-3-yl)methyl phosphate synthase (251 aa).

Lys29 functions as the Schiff-base intermediate with substrate in the catalytic mechanism. The active-site Proton acceptor is Lys87.

It belongs to the MfnB family.

The catalysed reaction is 2 D-glyceraldehyde 3-phosphate = 4-(hydroxymethyl)-2-furancarboxaldehyde phosphate + phosphate + 2 H2O. In terms of biological role, catalyzes the formation of 4-(hydroxymethyl)-2-furancarboxaldehyde phosphate (4-HFC-P) from two molecules of glyceraldehyde-3-P (GA-3-P). The protein is Putative (5-formylfuran-3-yl)methyl phosphate synthase of Kitasatospora aureofaciens (Streptomyces aureofaciens).